Reading from the N-terminus, the 226-residue chain is Ribonuclease 3 (226 aa).

Residues 7–129 (LPRLCRTLGY…IIGAVYLDSD (123 aa)) enclose the RNase III domain. Glu42 is a binding site for Mg(2+). Asp46 is an active-site residue. Mg(2+) is bound by residues Asp115 and Glu118. Glu118 is a catalytic residue. The 71-residue stretch at 156-226 (DAKTLLQEHL…AAQVLELLKK (71 aa)) folds into the DRBM domain.

This sequence belongs to the ribonuclease III family. In terms of assembly, homodimer. It depends on Mg(2+) as a cofactor.

It localises to the cytoplasm. The catalysed reaction is Endonucleolytic cleavage to 5'-phosphomonoester.. Digests double-stranded RNA. Involved in the processing of primary rRNA transcript to yield the immediate precursors to the large and small rRNAs (23S and 16S). Processes some mRNAs, and tRNAs when they are encoded in the rRNA operon. Processes pre-crRNA and tracrRNA of type II CRISPR loci if present in the organism. This chain is Ribonuclease 3, found in Shewanella baltica (strain OS185).